Reading from the N-terminus, the 499-residue chain is Glutamate--tRNA ligase (499 aa).

The 'HIGH' region signature appears at 12 to 22; the sequence is PSPTGHLHIGN. Positions 259–263 match the 'KMSKS' region motif; the sequence is KLSKR. Position 262 (K262) interacts with ATP.

Belongs to the class-I aminoacyl-tRNA synthetase family. Glutamate--tRNA ligase type 1 subfamily. Monomer.

It localises to the cytoplasm. It carries out the reaction tRNA(Glu) + L-glutamate + ATP = L-glutamyl-tRNA(Glu) + AMP + diphosphate. In terms of biological role, catalyzes the attachment of glutamate to tRNA(Glu) in a two-step reaction: glutamate is first activated by ATP to form Glu-AMP and then transferred to the acceptor end of tRNA(Glu). The sequence is that of Glutamate--tRNA ligase from Lactobacillus gasseri (strain ATCC 33323 / DSM 20243 / BCRC 14619 / CIP 102991 / JCM 1131 / KCTC 3163 / NCIMB 11718 / NCTC 13722 / AM63).